The sequence spans 161 residues: Urease accessory protein UreE (161 aa).

Belongs to the UreE family.

It localises to the cytoplasm. Its function is as follows. Involved in urease metallocenter assembly. Binds nickel. Probably functions as a nickel donor during metallocenter assembly. The protein is Urease accessory protein UreE of Arthrobacter sp. (strain FB24).